Here is a 343-residue protein sequence, read N- to C-terminus: GTPase Obg (343 aa).

One can recognise an Obg domain in the interval 1–159 (MKFLDQAKIY…RWVWLRLKLI (159 aa)). The OBG-type G domain maps to 160–328 (ADAGLVGLPN…LLRQVMTYVA (169 aa)). Residues 166-173 (GLPNAGKS), 191-195 (FTTLH), 213-216 (DIPG), 280-283 (NKCD), and 309-311 (SGV) each bind GTP. Mg(2+) is bound by residues serine 173 and threonine 193.

It belongs to the TRAFAC class OBG-HflX-like GTPase superfamily. OBG GTPase family. Monomer. Mg(2+) serves as cofactor.

Its subcellular location is the cytoplasm. In terms of biological role, an essential GTPase which binds GTP, GDP and possibly (p)ppGpp with moderate affinity, with high nucleotide exchange rates and a fairly low GTP hydrolysis rate. Plays a role in control of the cell cycle, stress response, ribosome biogenesis and in those bacteria that undergo differentiation, in morphogenesis control. This is GTPase Obg from Granulibacter bethesdensis (strain ATCC BAA-1260 / CGDNIH1).